The sequence spans 244 residues: Phosphoadenosine 5'-phosphosulfate reductase (244 aa).

The active-site Nucleophile; cysteine thiosulfonate intermediate is the Cys-239.

The protein belongs to the PAPS reductase family. CysH subfamily.

It is found in the cytoplasm. The enzyme catalyses [thioredoxin]-disulfide + sulfite + adenosine 3',5'-bisphosphate + 2 H(+) = [thioredoxin]-dithiol + 3'-phosphoadenylyl sulfate. It participates in sulfur metabolism; hydrogen sulfide biosynthesis; sulfite from sulfate: step 3/3. In terms of biological role, catalyzes the formation of sulfite from phosphoadenosine 5'-phosphosulfate (PAPS) using thioredoxin as an electron donor. The chain is Phosphoadenosine 5'-phosphosulfate reductase from Escherichia coli (strain K12 / MC4100 / BW2952).